The following is a 479-amino-acid chain: Cysteine protease effector 1 (479 aa).

The protein is Cysteine protease effector 1 of Escherichia coli O1:K1:H7 (strain ATCC 11775 / DSM 30083 / JCM 1649 / NBRC 102203 / NCTC 9001 / U5/41).